We begin with the raw amino-acid sequence, 301 residues long: Methionyl-tRNA formyltransferase (301 aa).

109-112 serves as a coordination point for (6S)-5,6,7,8-tetrahydrofolate; the sequence is SLLP.

It belongs to the Fmt family.

The catalysed reaction is L-methionyl-tRNA(fMet) + (6R)-10-formyltetrahydrofolate = N-formyl-L-methionyl-tRNA(fMet) + (6S)-5,6,7,8-tetrahydrofolate + H(+). Its function is as follows. Attaches a formyl group to the free amino group of methionyl-tRNA(fMet). The formyl group appears to play a dual role in the initiator identity of N-formylmethionyl-tRNA by promoting its recognition by IF2 and preventing the misappropriation of this tRNA by the elongation apparatus. The chain is Methionyl-tRNA formyltransferase from Jannaschia sp. (strain CCS1).